The chain runs to 303 residues: Ribosomal protein L11 methyltransferase (303 aa).

S-adenosyl-L-methionine-binding residues include Thr144, Gly165, Asp187, and Asn235.

Belongs to the methyltransferase superfamily. PrmA family.

The protein localises to the cytoplasm. The catalysed reaction is L-lysyl-[protein] + 3 S-adenosyl-L-methionine = N(6),N(6),N(6)-trimethyl-L-lysyl-[protein] + 3 S-adenosyl-L-homocysteine + 3 H(+). Functionally, methylates ribosomal protein L11. The sequence is that of Ribosomal protein L11 methyltransferase from Prochlorococcus marinus (strain AS9601).